Consider the following 104-residue polypeptide: N(4)-acetylcytidine amidohydrolase (104 aa).

Positions 6–102 (ITFYQRFEAD…SEFWVIEIRL (97 aa)) constitute an ASCH domain. The active-site Proton acceptor is Lys-21. Residue Thr-24 is the Nucleophile of the active site. Residue Glu-74 is the Proton donor of the active site.

Belongs to the N(4)-acetylcytidine amidohydrolase family.

The catalysed reaction is N(4)-acetylcytidine + H2O = cytidine + acetate + H(+). It catalyses the reaction N(4)-acetyl-2'-deoxycytidine + H2O = 2'-deoxycytidine + acetate + H(+). It carries out the reaction N(4)-acetylcytosine + H2O = cytosine + acetate + H(+). In terms of biological role, catalyzes the hydrolysis of N(4)-acetylcytidine (ac4C). The polypeptide is N(4)-acetylcytidine amidohydrolase (Haemophilus influenzae (strain PittEE)).